Reading from the N-terminus, the 346-residue chain is Leucine zipper protein 2 (346 aa).

The N-terminal stretch at 1–19 is a signal peptide; it reads MKFSPAHYLLPLLPALVLS. The stretch at 16 to 211 forms a coiled coil; it reads LVLSTRQDYE…QMKAMKETVQ (196 aa). Asn133 carries an N-linked (GlcNAc...) asparagine glycan. Positions 164–192 are leucine-zipper; that stretch reads LRYGKKDLLFKAQQLTDLEQKLAVAKNEL. Positions 225–346 are disordered; sequence ALSLITSNPT…GMAAREEKIL (122 aa). The segment covering 250-261 has biased composition (low complexity); that stretch reads AAAKSKPQQSAS. A compositionally biased stretch (polar residues) spans 262–283; sequence GNNESSQVESTKEGSPSTTACD. Asn264 carries an N-linked (GlcNAc...) asparagine glycan. Residues 286 to 298 are compositionally biased toward basic and acidic residues; the sequence is DEGRTCSIKHKES. N-linked (GlcNAc...) asparagine glycosylation occurs at Asn302.

The protein resides in the secreted. This is Leucine zipper protein 2 (LUZP2) from Pongo abelii (Sumatran orangutan).